Reading from the N-terminus, the 593-residue chain is Elongation factor 4 (593 aa).

Positions 2 to 181 constitute a tr-type G domain; the sequence is KNIRNFCIIA…AVVERIPHPT (180 aa). GTP is bound by residues 14–19 and 128–131; these read DHGKST and NKCD.

Belongs to the TRAFAC class translation factor GTPase superfamily. Classic translation factor GTPase family. LepA subfamily.

It localises to the cell inner membrane. The enzyme catalyses GTP + H2O = GDP + phosphate + H(+). Its function is as follows. Required for accurate and efficient protein synthesis under certain stress conditions. May act as a fidelity factor of the translation reaction, by catalyzing a one-codon backward translocation of tRNAs on improperly translocated ribosomes. Back-translocation proceeds from a post-translocation (POST) complex to a pre-translocation (PRE) complex, thus giving elongation factor G a second chance to translocate the tRNAs correctly. Binds to ribosomes in a GTP-dependent manner. This is Elongation factor 4 from Phocaeicola vulgatus (strain ATCC 8482 / DSM 1447 / JCM 5826 / CCUG 4940 / NBRC 14291 / NCTC 11154) (Bacteroides vulgatus).